The chain runs to 206 residues: Cytochrome c oxidase subunit 3 (206 aa).

5 helical membrane passes run 26-46, 68-88, 97-117, 143-163, and 185-205; these read FLGFWFFLGGETILFATFFGT, LVFIMTMLLLTSSLTSVLAMF, AMMIWMWITVVLGLAFLGFEI, LVGLHGAHVAFGLSWIIVLLI, and WHFIDVVWVFIFTVVYLMGVG.

The protein belongs to the cytochrome c oxidase subunit 3 family.

The protein localises to the cell membrane. It carries out the reaction 4 Fe(II)-[cytochrome c] + O2 + 8 H(+)(in) = 4 Fe(III)-[cytochrome c] + 2 H2O + 4 H(+)(out). The protein is Cytochrome c oxidase subunit 3 (ctaE) of Alkalihalophilus pseudofirmus (strain ATCC BAA-2126 / JCM 17055 / OF4) (Bacillus pseudofirmus).